The chain runs to 106 residues: Probable insulin-like peptide beta-type 1 (106 aa).

An N-terminal signal peptide occupies residues 1–19 (MFSFFTYFLLSALLLSASC). Positions 20 to 51 (RQPSMDTSKADRILREIEMETELENQLSRARR) are cleaved as a propeptide — removed; by convertase egl-3. Disulfide bonds link Cys-60/Cys-89, Cys-72/Cys-102, Cys-76/Cys-103, and Cys-88/Cys-93.

The protein belongs to the insulin family. As to expression, expressed by ASI and ASJ sensory neurons and weakly by ventral cord motor neurons.

It is found in the secreted. Probable insulin-like peptide which negatively regulates synapse development at the neuromuscular junctions. Probably acts as a daf-2/InsR agonist ligand to prevent dauer formation under optimal environmental conditions. The sequence is that of Probable insulin-like peptide beta-type 1 (ins-4) from Caenorhabditis elegans.